The chain runs to 209 residues: Ribosomal RNA large subunit methyltransferase E (209 aa).

Residues glycine 63, tryptophan 65, aspartate 83, aspartate 99, and aspartate 124 each coordinate S-adenosyl-L-methionine. Lysine 164 serves as the catalytic Proton acceptor.

Belongs to the class I-like SAM-binding methyltransferase superfamily. RNA methyltransferase RlmE family.

The protein resides in the cytoplasm. It carries out the reaction uridine(2552) in 23S rRNA + S-adenosyl-L-methionine = 2'-O-methyluridine(2552) in 23S rRNA + S-adenosyl-L-homocysteine + H(+). Its function is as follows. Specifically methylates the uridine in position 2552 of 23S rRNA at the 2'-O position of the ribose in the fully assembled 50S ribosomal subunit. The protein is Ribosomal RNA large subunit methyltransferase E of Yersinia pseudotuberculosis serotype O:1b (strain IP 31758).